An 830-amino-acid polypeptide reads, in one-letter code: Adhesion G protein-coupled receptor E2 (830 aa).

Residues 1 to 22 form the signal peptide; it reads MRHGHPRLLPGLLMLLLLPLGA. Topologically, residues 23–540 are extracellular; sequence AAQKTSGCAR…MAHYDVQEED (518 aa). One can recognise an EGF-like 1 domain in the interval 26–68; it reads KTSGCARWCPPKSTCVNATTCRCSPGFSSLSGEIFSSPLESCD. 5 disulfide bridges follow: cysteine 30–cysteine 40, cysteine 34–cysteine 46, cysteine 48–cysteine 67, cysteine 73–cysteine 87, and cysteine 81–cysteine 96. Asparagine 42 is a glycosylation site (N-linked (GlcNAc...) asparagine). Residues 69–108 enclose the EGF-like 1; calcium-binding domain; sequence DIDECGPPPLVSCGRLADCQNTEGSYHCMCSPGYALASGA. N-linked (GlcNAc...) asparagine glycosylation occurs at asparagine 113. One can recognise an EGF-like 2; calcium-binding domain in the interval 121 to 159; it reads DVDECQLKPRVCKSRGICTNTKGSYTCKCPPGFELNLGD. Cystine bridges form between cysteine 125–cysteine 138, cysteine 132–cysteine 147, cysteine 169–cysteine 182, cysteine 176–cysteine 191, cysteine 218–cysteine 231, and cysteine 225–cysteine 240. The 39-residue stretch at 165–203 folds into the EGF-like 3; calcium-binding domain; the sequence is DVNECTSGQNPCHNSTHCLNNIGGYECRCRPGWKPVPGS. The N-linked (GlcNAc...) asparagine glycan is linked to asparagine 178. In terms of domain architecture, EGF-like 4; calcium-binding spans 214–253; sequence DVDECSSGKHTCHYSTVCINTVGSYKCRCRRGWKPKPRFQ. Asparagine 258, asparagine 348, asparagine 361, and asparagine 379 each carry an N-linked (GlcNAc...) asparagine glycan. Residues 358-537 form the GAIN-B domain; it reads WTFNASAGTD…AVLMAHYDVQ (180 aa). 2 disulfides stabilise this stretch: cysteine 489-cysteine 519 and cysteine 507-cysteine 521. The interval 489–537 is GPS; the sequence is CVFWEHSQDECGHWSTRGCTVVDSGDTSTTCQCTHLSSFAVLMAHYDVQ. The helical transmembrane segment at 541–561 threads the bilayer; the sequence is LVLPVITYVGLGLSLLCLLLA. The Cytoplasmic segment spans residues 562–576; the sequence is ALTFLLCKAIQNTST. The chain crosses the membrane as a helical span at residues 577–597; the sequence is SLHLQLLICLFLAHLLFLMAI. Topologically, residues 598-603 are extracellular; it reads DRTEIK. The helical transmembrane segment at 604 to 624 threads the bilayer; the sequence is VLCSIIAGALHYLYLASFTWM. The Cytoplasmic portion of the chain corresponds to 625-651; it reads LLEGLHLFLTARNLMVVNYSSVSMLMK. A helical transmembrane segment spans residues 652-672; the sequence is KLMYPVGYGVPTLIVAISAAS. The Extracellular portion of the chain corresponds to 673–690; that stretch reads RSHLYGTRTRCWLNPEER. The chain crosses the membrane as a helical span at residues 691-711; sequence FIWSFLGPVCTIFSVNLGFFL. At 712-744 the chain is on the cytoplasmic side; that stretch reads MTLWILKSKLSSLNSDVSTLQNTRMLTFKAIAQ. A helical transmembrane segment spans residues 745–765; sequence LFILGCTWCLGILQVGPAAHV. Topologically, residues 766-767 are extracellular; the sequence is MA. Residues 768–788 traverse the membrane as a helical segment; the sequence is YLFTIINSLQGVFIFLVYCLL. Residues 789–830 are Cytoplasmic-facing; that stretch reads SQQVREEYGKWFKGIRKTRAESEKYTLSSRAMSDVNKPMMVN.

This sequence belongs to the G-protein coupled receptor 2 family. Adhesion G-protein coupled receptor (ADGR) subfamily. In terms of assembly, forms a heterodimer, consisting of a large extracellular region non-covalently linked to a seven-transmembrane moiety. Interacts with chondroitin sulfate; the interaction with chondroitin sulfate is calcium-dependent. Interacts with CD55. Post-translationally, autoproteolytically cleaved into 2 subunits, an extracellular alpha subunit and a seven-transmembrane beta subunit.

The protein resides in the cell membrane. It is found in the cell projection. It localises to the ruffle membrane. In terms of biological role, cell surface receptor that binds to the chondroitin sulfate moiety of glycosaminoglycan chains and promotes cell attachment. Promotes granulocyte chemotaxis, degranulation and adhesion. In macrophages, promotes the release of inflammatory cytokines, including IL8 and TNF. Signals probably through G-proteins. This is Adhesion G protein-coupled receptor E2 (ADGRE2) from Canis lupus familiaris (Dog).